We begin with the raw amino-acid sequence, 113 residues long: MECFPSFSFSGFSCFSLFLDNGDEDRSDNWIFFNDIDFCKSGFEYELKHRKHNNEPCRRILVLKHRSGNVRINRIISLLDVQSLHVYINLFHSSFIDKITIHLTKLCIFPGLP.

This is an uncharacterized protein from Saccharomyces cerevisiae (strain ATCC 204508 / S288c) (Baker's yeast).